Consider the following 320-residue polypeptide: GTPase Era (320 aa).

An Era-type G domain is found at 25–193 (HCGFIAIVGR…RKHVRDHLPK (169 aa)). The G1 stretch occupies residues 33 to 40 (GRPNVGKS). 33 to 40 (GRPNVGKS) lines the GTP pocket. Positions 59–63 (QTTRH) are G2. Positions 80–83 (DTPG) are G3. Residues 80-84 (DTPGL) and 142-145 (NKVD) contribute to the GTP site. The G4 stretch occupies residues 142 to 145 (NKVD). The segment at 172 to 174 (ISA) is G5. The region spanning 216 to 302 (VREKLMRFTG…YLETWVKVKS (87 aa)) is the KH type-2 domain.

The protein belongs to the TRAFAC class TrmE-Era-EngA-EngB-Septin-like GTPase superfamily. Era GTPase family. Monomer.

The protein resides in the cytoplasm. The protein localises to the cell inner membrane. Its function is as follows. An essential GTPase that binds both GDP and GTP, with rapid nucleotide exchange. Plays a role in 16S rRNA processing and 30S ribosomal subunit biogenesis and possibly also in cell cycle regulation and energy metabolism. The protein is GTPase Era of Vibrio vulnificus (strain CMCP6).